A 258-amino-acid polypeptide reads, in one-letter code: UPF0246 protein MS0374 (258 aa).

It belongs to the UPF0246 family.

The polypeptide is UPF0246 protein MS0374 (Mannheimia succiniciproducens (strain KCTC 0769BP / MBEL55E)).